Reading from the N-terminus, the 214-residue chain is Adenylate kinase (214 aa).

ATP is bound at residue 10–15 (GAGKGT). An NMP region spans residues 30–59 (STGDMLRAAIKAGTELGKQAKSVIDAGQLV). Residues Thr31, Arg36, 57 to 59 (QLV), 85 to 88 (GFPR), and Gln92 each bind AMP. Positions 122–159 (GRRAHLPSGRTYHVVYNPPKEEGKDDETGEPLVIREDD) are LID. Residues Arg123 and 132–133 (TY) each bind ATP. 2 residues coordinate AMP: Arg156 and Arg167. Residue Lys200 coordinates ATP.

The protein belongs to the adenylate kinase family. As to quaternary structure, monomer.

Its subcellular location is the cytoplasm. The catalysed reaction is AMP + ATP = 2 ADP. The protein operates within purine metabolism; AMP biosynthesis via salvage pathway; AMP from ADP: step 1/1. In terms of biological role, catalyzes the reversible transfer of the terminal phosphate group between ATP and AMP. Plays an important role in cellular energy homeostasis and in adenine nucleotide metabolism. This chain is Adenylate kinase, found in Aliivibrio fischeri (strain ATCC 700601 / ES114) (Vibrio fischeri).